The chain runs to 98 residues: NADH-ubiquinone oxidoreductase chain 4L (98 aa).

A run of 3 helical transmembrane segments spans residues 1 to 21, 29 to 49, and 59 to 79; these read MSLV…GLLM, ALLC…ITIL, and TPII…ALLV.

This sequence belongs to the complex I subunit 4L family. As to quaternary structure, core subunit of respiratory chain NADH dehydrogenase (Complex I) which is composed of 45 different subunits.

The protein localises to the mitochondrion inner membrane. It catalyses the reaction a ubiquinone + NADH + 5 H(+)(in) = a ubiquinol + NAD(+) + 4 H(+)(out). Functionally, core subunit of the mitochondrial membrane respiratory chain NADH dehydrogenase (Complex I) which catalyzes electron transfer from NADH through the respiratory chain, using ubiquinone as an electron acceptor. Part of the enzyme membrane arm which is embedded in the lipid bilayer and involved in proton translocation. The chain is NADH-ubiquinone oxidoreductase chain 4L (MT-ND4L) from Lipotes vexillifer (Yangtze river dolphin).